We begin with the raw amino-acid sequence, 244 residues long: tRNA1(Val) (adenine(37)-N6)-methyltransferase (244 aa).

The protein belongs to the methyltransferase superfamily. tRNA (adenine-N(6)-)-methyltransferase family.

It is found in the cytoplasm. It catalyses the reaction adenosine(37) in tRNA1(Val) + S-adenosyl-L-methionine = N(6)-methyladenosine(37) in tRNA1(Val) + S-adenosyl-L-homocysteine + H(+). Specifically methylates the adenine in position 37 of tRNA(1)(Val) (anticodon cmo5UAC). This is tRNA1(Val) (adenine(37)-N6)-methyltransferase from Shewanella sediminis (strain HAW-EB3).